A 338-amino-acid polypeptide reads, in one-letter code: MLSKNVHTADVVIVGAGPVGLFAVFQAGMLEMKCHVVDALDCIGGQCVTLYPDKPIYDIPAYPVITAAKLIEQLKQQVAPFDTVYHLGQQVIGCKIDNDIITITTSAEQVICSKSLIIAAGCGAFKYKRLILDNIEAFENKTVFYSVKDKNKFINKKVVIAGGGDSAIDWTLLLSDVAEVIYLVHRRENFRCAPHSLNQIKQLAEYGKVQMIVPYQLAKLTGENGLLQEVLVTNFNGGTQTLPADYLLAFFGLAADLGPIHKWGLKTDLRRIEVNSITYETTIPGIYAIGDVASYPGKLKLILTGFAEAATAMSHCYQRVFGKKMHFQYSTVKGVLRS.

Asp-38, Gln-46, Tyr-51, Val-91, Phe-125, Asp-291, and Thr-331 together coordinate FAD.

The protein belongs to the ferredoxin--NADP reductase type 2 family. Homodimer. FAD is required as a cofactor.

It carries out the reaction 2 reduced [2Fe-2S]-[ferredoxin] + NADP(+) + H(+) = 2 oxidized [2Fe-2S]-[ferredoxin] + NADPH. This chain is Ferredoxin--NADP reductase, found in Orientia tsutsugamushi (strain Boryong) (Rickettsia tsutsugamushi).